Here is a 144-residue protein sequence, read N- to C-terminus: Androgenic gland hormone (144 aa).

The signal sequence occupies residues 1–21; the sequence is MKGLVILVSLMCLALYNRICA. Cystine bridges form between Cys-33/Cys-123, Cys-42/Cys-59, Cys-44/Cys-141, and Cys-124/Cys-132. A propeptide spans 68–113 (c peptide); sequence SAPEDELAFEDYEDQDYFHPRALSIPSEIEHDNEKESDAFSILSRG. The N-linked (GlcNAc...) (complex) asparagine glycan is linked to Asn-133.

As to expression, androgenic gland.

It localises to the secreted. Functionally, controls sex differentiation and the formation of male appendages, spermatogenesis, pigmentation, and male specific behavior. This chain is Androgenic gland hormone, found in Armadillidium vulgare (Pillbug).